The sequence spans 307 residues: Transaldolase (307 aa).

Catalysis depends on Lys125, which acts as the Schiff-base intermediate with substrate.

It belongs to the transaldolase family. Type 1 subfamily. In terms of assembly, homodimer.

Its subcellular location is the cytoplasm. The catalysed reaction is D-sedoheptulose 7-phosphate + D-glyceraldehyde 3-phosphate = D-erythrose 4-phosphate + beta-D-fructose 6-phosphate. It functions in the pathway carbohydrate degradation; pentose phosphate pathway; D-glyceraldehyde 3-phosphate and beta-D-fructose 6-phosphate from D-ribose 5-phosphate and D-xylulose 5-phosphate (non-oxidative stage): step 2/3. Functionally, transaldolase is important for the balance of metabolites in the pentose-phosphate pathway. In Pseudomonas aeruginosa (strain LESB58), this protein is Transaldolase.